The sequence spans 447 residues: uncharacterized protein (447 aa).

The tract at residues 39 to 76 (PQAAPYTRNNGMGECRRGHRQGHRAEVHDNRPADKVGQ) is disordered. The span at 61–72 (HRAEVHDNRPAD) shows a compositional bias: basic and acidic residues.

The protein belongs to the 3-oxoacid CoA-transferase subunit A family.

This is an uncharacterized protein from Archaeoglobus fulgidus (strain ATCC 49558 / DSM 4304 / JCM 9628 / NBRC 100126 / VC-16).